A 563-amino-acid polypeptide reads, in one-letter code: Tripeptidyl-peptidase 1 (563 aa).

The N-terminal stretch at 1-19 (MGPRSGLLGLFALFVAGKC) is a signal peptide. Positions 20 to 195 (SYSPEPDQQR…PEPQVPGTVG (176 aa)) are cleaved as a propeptide — removed in mature form. Cys111 and Cys122 are oxidised to a cystine. Residues 199 to 563 (GVTPSVIRKR…PALLKTLMNP (365 aa)) enclose the Peptidase S53 domain. N-linked (GlcNAc...) asparagine glycans are attached at residues Asn210 and Asn222. Catalysis depends on charge relay system residues Glu272 and Asp276. N-linked (GlcNAc...) asparagine glycans are attached at residues Asn286, Asn313, and Asn443. 2 disulfide bridges follow: Cys365/Cys526 and Cys522/Cys537. The active-site Charge relay system is the Ser475. Residues Asp517 and Val518 each contribute to the Ca(2+) site. 3 residues coordinate Ca(2+): Gly539, Gly541, and Asp543.

In terms of assembly, monomer. Interacts with CLN5. Interacts with CLN3. Ca(2+) is required as a cofactor. In terms of processing, activated by autocatalytic proteolytical processing upon acidification. N-glycosylation is required for processing and activity.

It is found in the lysosome. Its subcellular location is the melanosome. The enzyme catalyses Release of an N-terminal tripeptide from a polypeptide, but also has endopeptidase activity.. In terms of biological role, lysosomal serine protease with tripeptidyl-peptidase I activity. May act as a non-specific lysosomal peptidase which generates tripeptides from the breakdown products produced by lysosomal proteinases. Requires substrates with an unsubstituted N-terminus. This Bos taurus (Bovine) protein is Tripeptidyl-peptidase 1 (TPP1).